The following is a 254-amino-acid chain: 3-deoxy-manno-octulosonate cytidylyltransferase (254 aa).

The protein belongs to the KdsB family.

It is found in the cytoplasm. The enzyme catalyses 3-deoxy-alpha-D-manno-oct-2-ulosonate + CTP = CMP-3-deoxy-beta-D-manno-octulosonate + diphosphate. Its pathway is nucleotide-sugar biosynthesis; CMP-3-deoxy-D-manno-octulosonate biosynthesis; CMP-3-deoxy-D-manno-octulosonate from 3-deoxy-D-manno-octulosonate and CTP: step 1/1. It participates in bacterial outer membrane biogenesis; lipopolysaccharide biosynthesis. Functionally, activates KDO (a required 8-carbon sugar) for incorporation into bacterial lipopolysaccharide in Gram-negative bacteria. The protein is 3-deoxy-manno-octulosonate cytidylyltransferase of Chlamydia pneumoniae (Chlamydophila pneumoniae).